Consider the following 306-residue polypeptide: Recombination-associated protein RdgC (306 aa).

The protein belongs to the RdgC family.

Its subcellular location is the cytoplasm. It is found in the nucleoid. Its function is as follows. May be involved in recombination. The protein is Recombination-associated protein RdgC of Burkholderia ambifaria (strain MC40-6).